A 439-amino-acid polypeptide reads, in one-letter code: Xaa-Pro dipeptidase (439 aa).

Positions 244, 255, 335, 380, and 419 each coordinate Mn(2+).

It belongs to the peptidase M24B family. Bacterial-type prolidase subfamily. Mn(2+) serves as cofactor.

It catalyses the reaction Xaa-L-Pro dipeptide + H2O = an L-alpha-amino acid + L-proline. In terms of biological role, splits dipeptides with a prolyl residue in the C-terminal position. The chain is Xaa-Pro dipeptidase from Shewanella sp. (strain MR-7).